Reading from the N-terminus, the 82-residue chain is uncharacterized protein (82 aa).

This is an uncharacterized protein from Human herpesvirus 6A (strain Uganda-1102) (HHV-6 variant A).